The primary structure comprises 400 residues: Argininosuccinate synthase (400 aa).

Residues 10-18 (AYSGGVDTS) and alanine 38 each bind ATP. Residue tyrosine 89 coordinates L-citrulline. Glycine 119 provides a ligand contact to ATP. The L-aspartate site is built by threonine 121, asparagine 125, and aspartate 126. Asparagine 125 lines the L-citrulline pocket. Residues arginine 129, serine 177, glutamate 262, and tyrosine 274 each coordinate L-citrulline.

The protein belongs to the argininosuccinate synthase family. Type 1 subfamily. Homotetramer.

It is found in the cytoplasm. The catalysed reaction is L-citrulline + L-aspartate + ATP = 2-(N(omega)-L-arginino)succinate + AMP + diphosphate + H(+). It participates in amino-acid biosynthesis; L-arginine biosynthesis; L-arginine from L-ornithine and carbamoyl phosphate: step 2/3. This Trichodesmium erythraeum (strain IMS101) protein is Argininosuccinate synthase.